The following is a 750-amino-acid chain: uncharacterized protein (750 aa).

The next 5 membrane-spanning stretches (helical) occupy residues 2-22 (FVLL…TNVI), 33-53 (SLIL…DIFI), 79-99 (LLVL…VVSL), 116-136 (LSIF…TIML), and 143-163 (IQSL…SPIA). 2 disordered regions span residues 385–461 (DNKG…KKKE) and 571–651 (NKEF…PLTA). Residues 398-411 (ENTKGDDNSSEKTD) are compositionally biased toward basic and acidic residues. The segment covering 412–424 (TVSVSTKLKTTAD) has biased composition (polar residues). Residues 425-436 (QSESTQMSSEST) are compositionally biased toward low complexity. The span at 437–451 (ATGISSDPQSQGKMN) shows a compositional bias: polar residues. Residues 452–461 (NKSEEQKKKE) are compositionally biased toward basic and acidic residues. Residues 618-629 (DSKGNTATNSDT) show a composition bias toward polar residues. A helical membrane pass occupies residues 724–744 (ATIVITLFLTVVLLAIAFFFF).

This sequence to M.pneumoniae MPN_335.

It is found in the cell membrane. This is an uncharacterized protein from Mycoplasma pneumoniae (strain ATCC 29342 / M129 / Subtype 1) (Mycoplasmoides pneumoniae).